A 538-amino-acid chain; its full sequence is Probable bifunctional riboflavin biosynthesis protein RIBA 1, chloroplastic (538 aa).

The segment covering 1–16 has biased composition (polar residues); it reads MSRLSSIYSQHRTSGL. Residues 1–29 form a disordered region; the sequence is MSRLSSIYSQHRTSGLRSDRSIMPNSTSN. The transit peptide at 1 to 73 directs the protein to the chloroplast; sequence MSRLSSIYSQ…NGQASPSKVV (73 aa). The tract at residues 46–311 is DHBP synthase; sequence RNFHISHAVG…IADLIRYRRK (266 aa). D-ribulose 5-phosphate contacts are provided by residues 134–135, aspartate 139, 249–253, and glutamate 273; these read RE and RAGHT. Residue glutamate 135 participates in Mg(2+) binding. Histidine 252 is a binding site for Mg(2+). The interval 312-530 is GTP cyclohydrolase II; it reads RDRLVERVCV…DGGIKKEQDQ (219 aa). Residue 362–366 participates in GTP binding; the sequence is RVHSE. Cysteine 367, cysteine 378, and cysteine 380 together coordinate Zn(2+). Residues glutamine 383, 406-408, and threonine 428 each bind GTP; that span reads EGR. Aspartate 440 acts as the Proton acceptor; for GTP cyclohydrolase activity in catalysis. Residue arginine 442 is the Nucleophile; for GTP cyclohydrolase activity of the active site. The GTP site is built by threonine 463 and lysine 468. The segment at 506–538 is disordered; that stretch reads HVYGTRPSGNTSTLADGGIKKEQDQIDSASEQE.

This sequence in the N-terminal section; belongs to the DHBP synthase family. The protein in the C-terminal section; belongs to the GTP cyclohydrolase II family. It depends on Mg(2+) as a cofactor. Mn(2+) is required as a cofactor. The cofactor is Zn(2+).

Its subcellular location is the plastid. The protein resides in the chloroplast. The enzyme catalyses D-ribulose 5-phosphate = (2S)-2-hydroxy-3-oxobutyl phosphate + formate + H(+). It carries out the reaction GTP + 4 H2O = 2,5-diamino-6-hydroxy-4-(5-phosphoribosylamino)-pyrimidine + formate + 2 phosphate + 3 H(+). The protein operates within cofactor biosynthesis; riboflavin biosynthesis; 2-hydroxy-3-oxobutyl phosphate from D-ribulose 5-phosphate: step 1/1. It functions in the pathway cofactor biosynthesis; riboflavin biosynthesis; 5-amino-6-(D-ribitylamino)uracil from GTP: step 1/4. Its function is as follows. Involved in riboflavin biosynthesis. Catalyzes both the conversion of D-ribulose 5-phosphate to formate and 3,4-dihydroxy-2-butanone 4-phosphate and the conversion of GTP to 2,5-diamino-6-ribosylamino-4(3H)-pyrimidinone 5'-phosphate (DARP), formate and pyrophosphate. The polypeptide is Probable bifunctional riboflavin biosynthesis protein RIBA 1, chloroplastic (RIBA1) (Oryza sativa subsp. japonica (Rice)).